We begin with the raw amino-acid sequence, 335 residues long: Ornithine carbamoyltransferase, catabolic (335 aa).

Carbamoyl phosphate is bound by residues 59–62, Q86, R110, and 137–140; these read STRT and HPTQ. L-ornithine-binding positions include N169, D233, and 237 to 238; that span reads SM. Carbamoyl phosphate-binding positions include 274 to 275 and R319; that span reads CL.

Belongs to the aspartate/ornithine carbamoyltransferase superfamily. OTCase family.

It is found in the cytoplasm. The catalysed reaction is carbamoyl phosphate + L-ornithine = L-citrulline + phosphate + H(+). Its pathway is amino-acid degradation; L-arginine degradation via ADI pathway; carbamoyl phosphate from L-arginine: step 2/2. Its function is as follows. Reversibly catalyzes the transfer of the carbamoyl group from carbamoyl phosphate (CP) to the N(epsilon) atom of ornithine (ORN) to produce L-citrulline. This chain is Ornithine carbamoyltransferase, catabolic (arcB), found in Bacillus licheniformis (strain ATCC 14580 / DSM 13 / JCM 2505 / CCUG 7422 / NBRC 12200 / NCIMB 9375 / NCTC 10341 / NRRL NRS-1264 / Gibson 46).